The sequence spans 649 residues: Acetyl-coenzyme A synthetase (649 aa).

Residues 191–194 (RGGR), T309, and N333 contribute to the CoA site. Residues 385 to 387 (GEP), 409 to 414 (DTWWQT), D498, and R513 each bind ATP. A CoA-binding site is contributed by S521. An ATP-binding site is contributed by R524. Mg(2+) contacts are provided by V535, H537, and V540. R582 contacts CoA. Residue K607 is modified to N6-acetyllysine.

Belongs to the ATP-dependent AMP-binding enzyme family. Requires Mg(2+) as cofactor. In terms of processing, acetylated. Deacetylation by the SIR2-homolog deacetylase activates the enzyme.

The catalysed reaction is acetate + ATP + CoA = acetyl-CoA + AMP + diphosphate. In terms of biological role, catalyzes the conversion of acetate into acetyl-CoA (AcCoA), an essential intermediate at the junction of anabolic and catabolic pathways. AcsA undergoes a two-step reaction. In the first half reaction, AcsA combines acetate with ATP to form acetyl-adenylate (AcAMP) intermediate. In the second half reaction, it can then transfer the acetyl group from AcAMP to the sulfhydryl group of CoA, forming the product AcCoA. This Novosphingobium aromaticivorans (strain ATCC 700278 / DSM 12444 / CCUG 56034 / CIP 105152 / NBRC 16084 / F199) protein is Acetyl-coenzyme A synthetase.